The following is a 484-amino-acid chain: uncharacterized protein (484 aa).

Over residues methionine 1–threonine 14 the composition is skewed to low complexity. A disordered region spans residues methionine 1–threonine 32. Over residues valine 15–threonine 32 the composition is skewed to polar residues. The residue at position 305 (lysine 305) is an N6-(pyridoxal phosphate)lysine.

It belongs to the class-III pyridoxal-phosphate-dependent aminotransferase family. The cofactor is pyridoxal 5'-phosphate.

This is an uncharacterized protein from Schizosaccharomyces pombe (strain 972 / ATCC 24843) (Fission yeast).